The sequence spans 192 residues: PBAN-type neuropeptides (192 aa).

A signal peptide spans 1 to 23 (MYKTNIVFNVLALALFSIFFASC). Leucine 47 carries the post-translational modification Leucine amide. Residues 51 to 94 (SMKPSTEDNRQTFLRLLEAADALKFYYDQLPYERQADEPETKVT) constitute a propeptide that is removed on maturation. Residues leucine 103, leucine 122, leucine 158, and leucine 168 each carry the leucine amide modification. A propeptide spanning residues 171-192 (ELSYDYPTKYRVARSVNKTMDN) is cleaved from the precursor.

It belongs to the pyrokinin family. In terms of tissue distribution, expression is restricted to the subesophageal ganglion.

The protein resides in the secreted. A hormone that controls sex pheromone production in females and pheromone responsiveness in male. Also mediates visceral muscle contractile activity (myotropic activity). Identical to MRCH which is implicated in the formation of both melanin in the cuticle and ommochrome in the epidermis of armyworm species. In terms of biological role, diapause hormone (DH) is responsible for induction of embryonic diapause. Its function is as follows. The three SGNPS are far less active than DH in inducing diapause eggs. Beta-SGNP expressed higher pban activity than PBAN-I, but alpha- and gamma-SGNP were far less active in pheromonotropic activity. The protein is PBAN-type neuropeptides of Bombyx mori (Silk moth).